A 315-amino-acid chain; its full sequence is Acetyl-coenzyme A carboxylase carboxyl transferase subunit alpha (315 aa).

Positions 36-289 (LGKKRLELME…RKAVAAELKV (254 aa)) constitute a CoA carboxyltransferase C-terminal domain.

This sequence belongs to the AccA family. As to quaternary structure, acetyl-CoA carboxylase is a heterohexamer composed of biotin carboxyl carrier protein (AccB), biotin carboxylase (AccC) and two subunits each of ACCase subunit alpha (AccA) and ACCase subunit beta (AccD).

Its subcellular location is the cytoplasm. The catalysed reaction is N(6)-carboxybiotinyl-L-lysyl-[protein] + acetyl-CoA = N(6)-biotinyl-L-lysyl-[protein] + malonyl-CoA. The protein operates within lipid metabolism; malonyl-CoA biosynthesis; malonyl-CoA from acetyl-CoA: step 1/1. In terms of biological role, component of the acetyl coenzyme A carboxylase (ACC) complex. First, biotin carboxylase catalyzes the carboxylation of biotin on its carrier protein (BCCP) and then the CO(2) group is transferred by the carboxyltransferase to acetyl-CoA to form malonyl-CoA. This is Acetyl-coenzyme A carboxylase carboxyl transferase subunit alpha from Francisella philomiragia subsp. philomiragia (strain ATCC 25017 / CCUG 19701 / FSC 153 / O#319-036).